A 497-amino-acid chain; its full sequence is Proline--tRNA ligase (497 aa).

Belongs to the class-II aminoacyl-tRNA synthetase family. ProS type 3 subfamily. In terms of assembly, homodimer.

It is found in the cytoplasm. The enzyme catalyses tRNA(Pro) + L-proline + ATP = L-prolyl-tRNA(Pro) + AMP + diphosphate. Functionally, catalyzes the attachment of proline to tRNA(Pro) in a two-step reaction: proline is first activated by ATP to form Pro-AMP and then transferred to the acceptor end of tRNA(Pro). The sequence is that of Proline--tRNA ligase from Deinococcus geothermalis (strain DSM 11300 / CIP 105573 / AG-3a).